Consider the following 137-residue polypeptide: Large ribosomal subunit protein uL16 (137 aa).

The protein belongs to the universal ribosomal protein uL16 family. In terms of assembly, part of the 50S ribosomal subunit.

Functionally, binds 23S rRNA and is also seen to make contacts with the A and possibly P site tRNAs. In Magnetococcus marinus (strain ATCC BAA-1437 / JCM 17883 / MC-1), this protein is Large ribosomal subunit protein uL16.